The chain runs to 584 residues: (+)-larreatricin hydroxylase, chloroplastic (584 aa).

The N-terminal 32 residues, 1 to 32 (MASLSSQSKLLATPYSFPYHTKPSRVSLRRVS), are a transit peptide targeting the chloroplast. The transit peptide at 33-79 (CKASNDNKDKPNDQEKTFSIDRRNMLIGLGGLYGASNVFPSNQSTLA) directs the protein to the thylakoid. 2 disulfides stabilise this stretch: Cys91–Cys106 and Cys105–Cys168. Cu cation contacts are provided by His167, His188, His197, His319, His323, and His353. Positions 171 to 188 (CNGAYDQVGFPDVNIQVH) form a cross-link, 2'-(S-cysteinyl)-histidine (Cys-His). Positions 432 to 584 (RLRSKATTTT…KIEFVRDEED (153 aa)) are cleaved as a propeptide — removed in mature form.

The protein belongs to the tyrosinase family. Requires Cu(2+) as cofactor.

The protein localises to the plastid. It is found in the chloroplast thylakoid lumen. The catalysed reaction is (+)-larreatricin + AH2 + O2 = (+)-3'-hydroxylarreatricin + A + H2O. Functionally, enantio-specific polyphenol oxidase involved in aromatic ring hydroxylation. Involved in the biosynthesis of the creosote bush 8-8' linked lignans. Has a strong preference for the 3' position of (+)-larreatricin. The chain is (+)-larreatricin hydroxylase, chloroplastic from Larrea tridentata (Creosote bush).